The sequence spans 350 residues: GTPase Obg (350 aa).

The region spanning 1–158 is the Obg domain; sequence MFIDSVKITL…RLVRLELKLI (158 aa). The OBG-type G domain occupies 159-339; it reads ADVGLVGFPN…LKFMLLEEIK (181 aa). GTP-binding positions include 165–172, 190–194, 212–215, 280–283, and 320–322; these read GFPNVGKS, FTTLT, DIPG, SKSD, and SSL. Ser-172 and Thr-192 together coordinate Mg(2+).

This sequence belongs to the TRAFAC class OBG-HflX-like GTPase superfamily. OBG GTPase family. As to quaternary structure, monomer. Mg(2+) is required as a cofactor.

Its subcellular location is the cytoplasm. Its function is as follows. An essential GTPase which binds GTP, GDP and possibly (p)ppGpp with moderate affinity, with high nucleotide exchange rates and a fairly low GTP hydrolysis rate. Plays a role in control of the cell cycle, stress response, ribosome biogenesis and in those bacteria that undergo differentiation, in morphogenesis control. The protein is GTPase Obg of Campylobacter jejuni (strain RM1221).